The following is a 178-amino-acid chain: Alkyl hydroperoxide reductase AhpD (178 aa).

Cys130 functions as the Proton donor in the catalytic mechanism. Cys130 and Cys133 are joined by a disulfide. Cys133 acts as the Cysteine sulfenic acid (-SOH) intermediate in catalysis.

Belongs to the AhpD family. In terms of assembly, homotrimer.

It carries out the reaction N(6)-[(R)-dihydrolipoyl]-L-lysyl-[lipoyl-carrier protein] + a hydroperoxide = N(6)-[(R)-lipoyl]-L-lysyl-[lipoyl-carrier protein] + an alcohol + H2O. Antioxidant protein with alkyl hydroperoxidase activity. Required for the reduction of the AhpC active site cysteine residues and for the regeneration of the AhpC enzyme activity. The sequence is that of Alkyl hydroperoxide reductase AhpD from Mycobacterium marinum (strain ATCC BAA-535 / M).